The following is a 317-amino-acid chain: Transaldolase 2 (317 aa).

The Schiff-base intermediate with substrate role is filled by Lys-132.

Belongs to the transaldolase family. Type 1 subfamily. In terms of assembly, homodimer.

Its subcellular location is the cytoplasm. The catalysed reaction is D-sedoheptulose 7-phosphate + D-glyceraldehyde 3-phosphate = D-erythrose 4-phosphate + beta-D-fructose 6-phosphate. It participates in carbohydrate degradation; pentose phosphate pathway; D-glyceraldehyde 3-phosphate and beta-D-fructose 6-phosphate from D-ribose 5-phosphate and D-xylulose 5-phosphate (non-oxidative stage): step 2/3. Transaldolase is important for the balance of metabolites in the pentose-phosphate pathway. The sequence is that of Transaldolase 2 from Pectobacterium atrosepticum (strain SCRI 1043 / ATCC BAA-672) (Erwinia carotovora subsp. atroseptica).